We begin with the raw amino-acid sequence, 707 residues long: Zinc finger CCHC domain-containing protein 8 (707 aa).

Position 2 is an N-acetylalanine (A2). The disordered stretch occupies residues 16-44; it reads FDHPEESIPKPVHTRFKDDDGDEEDENGV. A compositionally biased stretch (acidic residues) spans 34-43; sequence DDGDEEDENG. Residues 45-80 adopt a coiled-coil conformation; it reads GDAELRERLRQCEETIEQLRAENQELKRKLNILTRP. A CCHC-type zinc finger spans residues 227 to 244; that stretch reads PHCFNCGSEEHQMKDCPM. RBM7 binding stretches follow at residues 286–299 and 309–324; these read FKPG…QDAL and FIYR…GWLK. T342 is modified (phosphothreonine). 3 disordered regions span residues 409–518, 531–607, and 641–660; these read APGV…LTLE, LEQA…TSLC, and QKLF…HSPI. K413 is covalently cross-linked (Glycyl lysine isopeptide (Lys-Gly) (interchain with G-Cter in SUMO2)). A compositionally biased stretch (low complexity) spans 456-465; the sequence is SQSSESFQFQ. Residues 466–496 are compositionally biased toward pro residues; sequence PPLPPDTPPLPRGTPPPVFTPPLPKGTPPLT. Residues T472, T479, and T485 each carry the phosphothreonine modification. T492 carries the post-translational modification Phosphothreonine; by GSK3. Residues 516-539 are a coiled coil; it reads TLEELEEQQRRIWAALEQAESVNS. Residues 549–559 show a composition bias toward polar residues; sequence LTGNSVASSPC. At T577 the chain carries Phosphothreonine. At S598 the chain carries Phosphoserine. The span at 598–607 shows a compositional bias: polar residues; sequence SPDSEVTSLC. Position 648 is a phosphothreonine (T648). A phosphoserine mark is found at S649, S658, and S695. Residues 659–707 are MTREX binding; that stretch reads PIPDMSKFATGITPFEFENMAESTGMYLRIRSLLKNSPRNQQKNKKASE.

The protein belongs to the ZCCHC8 family. Component of a nuclear TRAMP-like complex, an ATP-dependent exosome regulatory complex consisting of a helicase (MTREX), an oligadenylate polymerase (TENT4B or TENT4A), and a substrate specific RNA-binding factor (ZCCHC7 or ZCCHC8). Several TRAMP-like complexes exist with specific compositions and are associated with nuclear, or nucleolar RNA exosomes. Identified in the spliceosome C complex. Component of the nuclear exosome targeting (NEXT) complex composed of MTREX, ZCCHC8, and RBM7 that directs a subset of non-coding short-lived RNAs for exosomal degradation. Interacts with proteins involved in RNA processing and degradation such as MTREX and RBM7; interaction with MTREX enhances MTREX RNA helicase activity and bridges between RBM7 and MTREX. Interacts with TERC, the telomerase RNA component. In terms of processing, phosphorylation at Thr-492 by GSK3 is triggered in cells entering mitosis; this phosphorylation is greatly enhanced by nocodazole treatment, but reduced by lithium.

The protein localises to the nucleus. The protein resides in the nucleoplasm. Scaffolding subunit of the trimeric nuclear exosome targeting (NEXT) complex that is involved in the surveillance and turnover of aberrant transcripts and non-coding RNAs. NEXT functions as an RNA exosome cofactor that directs a subset of non-coding short-lived RNAs for exosomal degradation. May be involved in pre-mRNA splicing. It is required for 3'-end maturation of telomerase RNA component (TERC), TERC 3'-end targeting to the nuclear RNA exosome, and for telomerase function. In Homo sapiens (Human), this protein is Zinc finger CCHC domain-containing protein 8 (ZCCHC8).